A 206-amino-acid polypeptide reads, in one-letter code: Octanoyltransferase (206 aa).

The 177-residue stretch at 30–206 (PETNDEIWLV…EFVTLLNNSI (177 aa)) folds into the BPL/LPL catalytic domain. Substrate-binding positions include 69 to 76 (RGGQVTYH), 137 to 139 (SLG), and 150 to 152 (GIA). The active-site Acyl-thioester intermediate is Cys168.

This sequence belongs to the LipB family.

The protein resides in the cytoplasm. The catalysed reaction is octanoyl-[ACP] + L-lysyl-[protein] = N(6)-octanoyl-L-lysyl-[protein] + holo-[ACP] + H(+). It participates in protein modification; protein lipoylation via endogenous pathway; protein N(6)-(lipoyl)lysine from octanoyl-[acyl-carrier-protein]: step 1/2. Functionally, catalyzes the transfer of endogenously produced octanoic acid from octanoyl-acyl-carrier-protein onto the lipoyl domains of lipoate-dependent enzymes. Lipoyl-ACP can also act as a substrate although octanoyl-ACP is likely to be the physiological substrate. The protein is Octanoyltransferase of Francisella tularensis subsp. holarctica (strain FTNF002-00 / FTA).